A 153-amino-acid chain; its full sequence is Putative tRNA (cytidine(34)-2'-O)-methyltransferase (153 aa).

S-adenosyl-L-methionine is bound by residues Gly102, Ile122, and Ser131.

Belongs to the class IV-like SAM-binding methyltransferase superfamily. RNA methyltransferase TrmH family. TrmL subfamily.

Its subcellular location is the cytoplasm. It carries out the reaction cytidine(34) in tRNA + S-adenosyl-L-methionine = 2'-O-methylcytidine(34) in tRNA + S-adenosyl-L-homocysteine + H(+). The enzyme catalyses 5-carboxymethylaminomethyluridine(34) in tRNA(Leu) + S-adenosyl-L-methionine = 5-carboxymethylaminomethyl-2'-O-methyluridine(34) in tRNA(Leu) + S-adenosyl-L-homocysteine + H(+). In terms of biological role, could methylate the ribose at the nucleotide 34 wobble position in tRNA. The sequence is that of Putative tRNA (cytidine(34)-2'-O)-methyltransferase from Synechocystis sp. (strain ATCC 27184 / PCC 6803 / Kazusa).